Here is a 560-residue protein sequence, read N- to C-terminus: Protein tweety homolog 3 (560 aa).

Over 1 to 43 (MAAVVNYSPPWWVNLFHRLPHFNLQFQQTSSDFRPDDSDYQKA) the chain is Extracellular. Residues 44 to 64 (VLLLGAAALVCLALDLLFLLF) traverse the membrane as a helical segment. Over 65–87 (YSFWLCCCRRKNHDSPNADCCCT) the chain is Cytoplasmic. Residues 88-108 (AWCVIIATLVCSAGIAVGFYG) form a helical membrane-spanning segment. Residues 109–212 (NGETCDGVTR…TEQYDWYRWL (104 aa)) lie on the Extracellular side of the membrane. Glu111 and Asp114 together coordinate Ca(2+). Residues Asn127 and Asn145 are each glycosylated (N-linked (GlcNAc...) asparagine). A helical membrane pass occupies residues 213–233 (GYLGLLLFDVIICLLVLVGLI). The Cytoplasmic portion of the chain corresponds to 234-238 (RNSRS). Residues 239 to 259 (ILIGVCFLGVLTLVISWASLG) form a helical membrane-spanning segment. The Extracellular portion of the chain corresponds to 260 to 387 (LEFSFAVGAS…LTGLCYDGVE (128 aa)). Intrachain disulfides connect Cys272-Cys382 and Cys300-Cys367. An N-linked (GlcNAc...) asparagine glycan is attached at Asn352. A helical transmembrane segment spans residues 388–408 (GLIYLVLFSFVTALMFSSIVC). Residues 409-560 (SVPHTWQSKR…AIHRPHSAIH (152 aa)) are Cytoplasmic-facing. Disordered stretches follow at residues 415 to 435 (QSKR…GSRA) and 486 to 560 (TPRC…SAIH). Residues 539–549 (TSRSAPNSRPN) are compositionally biased toward polar residues.

Belongs to the tweety family. In terms of assembly, homotetramer; disulfide-linked. Forms cis-homodimers in the presence of Ca(2+).

Its subcellular location is the cell membrane. The catalysed reaction is chloride(in) = chloride(out). It carries out the reaction L-glutamate(out) = L-glutamate(in). Its function is as follows. May act as a calcium-independent, swelling-dependent volume-regulated anion channel (VRAC-swell) which plays a pivotal role in the process of regulatory volume decrease (RVD) in the brain through the efflux of anions like chloride and organic osmolytes like glutamate. Probable large-conductance Ca(2+)-activated chloride channel. The protein is Protein tweety homolog 3 (ttyh3b) of Danio rerio (Zebrafish).